The sequence spans 239 residues: MATPHINAEMGDFADVVLMPGDPLRAKYIAETFLEDAREVNNVRGMLGFTGTYKGRKISVMGHGMGIPSCSIYTKELITDFGVKKIIRVGSCGAVLPHVKLRDVVIGMGACTDSKVNRIRFKDHDFAAIADFDMVRNAVDAAKALGIDARVGNLFSADLFYSPDGEMFDVMEKYGILGVEMEAAGIYGVAAEFGAKALTICTVSDHIRTHEQTTAAERQTTFNDMIKIALESVLLGDKE.

His5 contacts a purine D-ribonucleoside. Phosphate is bound by residues Gly21 and Arg25. At Lys27 the chain carries N6-acetyllysine. Phosphate-binding positions include Arg44 and 88 to 91 (RVGS). A purine D-ribonucleoside contacts are provided by residues 180–182 (EME) and 204–205 (SD). The active-site Proton donor is Asp205.

This sequence belongs to the PNP/UDP phosphorylase family. As to quaternary structure, homohexamer; trimer of homodimers.

It carries out the reaction a purine D-ribonucleoside + phosphate = a purine nucleobase + alpha-D-ribose 1-phosphate. It catalyses the reaction a purine 2'-deoxy-D-ribonucleoside + phosphate = a purine nucleobase + 2-deoxy-alpha-D-ribose 1-phosphate. Functionally, catalyzes the reversible phosphorolytic breakdown of the N-glycosidic bond in the beta-(deoxy)ribonucleoside molecules, with the formation of the corresponding free purine bases and pentose-1-phosphate. In Escherichia coli O8 (strain IAI1), this protein is Purine nucleoside phosphorylase DeoD-type.